A 252-amino-acid polypeptide reads, in one-letter code: Chitooligosaccharide deacetylase (252 aa).

Residues H61 and H125 each contribute to the Mg(2+) site.

This sequence belongs to the YdjC deacetylase family. ChbG subfamily. Homodimer. Requires Mg(2+) as cofactor.

The protein resides in the cytoplasm. It catalyses the reaction N,N'-diacetylchitobiose + H2O = N-acetyl-beta-D-glucosaminyl-(1-&gt;4)-D-glucosamine + acetate. It carries out the reaction diacetylchitobiose-6'-phosphate + H2O = N'-monoacetylchitobiose-6'-phosphate + acetate. It participates in glycan degradation; chitin degradation. Functionally, involved in the degradation of chitin. ChbG is essential for growth on the acetylated chitooligosaccharides chitobiose and chitotriose but is dispensable for growth on cellobiose and chitosan dimer, the deacetylated form of chitobiose. Deacetylation of chitobiose-6-P and chitotriose-6-P is necessary for both the activation of the chb promoter by the regulatory protein ChbR and the hydrolysis of phosphorylated beta-glucosides by the phospho-beta-glucosidase ChbF. Catalyzes the removal of only one acetyl group from chitobiose-6-P to yield monoacetylchitobiose-6-P, the inducer of ChbR and the substrate of ChbF. This Escherichia coli (strain 55989 / EAEC) protein is Chitooligosaccharide deacetylase.